A 231-amino-acid polypeptide reads, in one-letter code: Flagellar L-ring protein (231 aa).

The signal sequence occupies residues 1–18 (MNRLLSVFALGGAVLLAG). Cysteine 19 carries the N-palmitoyl cysteine lipid modification. Cysteine 19 carries S-diacylglycerol cysteine lipidation.

It belongs to the FlgH family. As to quaternary structure, the basal body constitutes a major portion of the flagellar organelle and consists of four rings (L,P,S, and M) mounted on a central rod.

It is found in the cell outer membrane. It localises to the bacterial flagellum basal body. In terms of biological role, assembles around the rod to form the L-ring and probably protects the motor/basal body from shearing forces during rotation. The polypeptide is Flagellar L-ring protein (Pseudomonas putida (strain ATCC 700007 / DSM 6899 / JCM 31910 / BCRC 17059 / LMG 24140 / F1)).